Consider the following 496-residue polypeptide: Beta-amylase (496 aa).

The substrate site is built by Asp-54, His-94, and Asp-102. Glu-187 serves as the catalytic Proton donor. Lys-296, His-301, and Thr-343 together coordinate substrate. Glu-381 (proton acceptor) is an active-site residue. Substrate contacts are provided by residues 382 to 383 and Arg-421; that span reads NA.

Belongs to the glycosyl hydrolase 14 family.

It catalyses the reaction Hydrolysis of (1-&gt;4)-alpha-D-glucosidic linkages in polysaccharides so as to remove successive maltose units from the non-reducing ends of the chains.. In Vigna unguiculata (Cowpea), this protein is Beta-amylase (BMY1).